The sequence spans 255 residues: Hydroxyacylglutathione hydrolase (255 aa).

Zn(2+) is bound by residues His-53, His-55, Asp-57, His-58, His-110, Asp-127, and His-165.

Belongs to the metallo-beta-lactamase superfamily. Glyoxalase II family. In terms of assembly, monomer. It depends on Zn(2+) as a cofactor.

The catalysed reaction is an S-(2-hydroxyacyl)glutathione + H2O = a 2-hydroxy carboxylate + glutathione + H(+). It functions in the pathway secondary metabolite metabolism; methylglyoxal degradation; (R)-lactate from methylglyoxal: step 2/2. In terms of biological role, thiolesterase that catalyzes the hydrolysis of S-D-lactoyl-glutathione to form glutathione and D-lactic acid. The protein is Hydroxyacylglutathione hydrolase of Xanthomonas oryzae pv. oryzae (strain MAFF 311018).